We begin with the raw amino-acid sequence, 479 residues long: uncharacterized protein (479 aa).

8 helical membrane-spanning segments follow: residues 25–45, 63–83, 110–130, 133–153, 175–195, 229–249, 287–307, and 328–348; these read VVFV…LFFF, IAMI…LAGG, LFGP…TVIF, GVFN…AGIL, VLSI…VLGI, ILLY…IVWL, LILN…IAFI, and LFAP…LLLL.

In the C-terminal section; belongs to the GatC family.

It localises to the cell membrane. This is an uncharacterized protein from Mycoplasma pneumoniae (strain ATCC 29342 / M129 / Subtype 1) (Mycoplasmoides pneumoniae).